A 62-amino-acid chain; its full sequence is Photosystem II reaction center protein Z (62 aa).

A run of 2 helical transmembrane segments spans residues 8-28 (ALFA…VAFA) and 41-61 (FQGV…NSLV).

The protein belongs to the PsbZ family. As to quaternary structure, PSII is composed of 1 copy each of membrane proteins PsbA, PsbB, PsbC, PsbD, PsbE, PsbF, PsbH, PsbI, PsbJ, PsbK, PsbL, PsbM, PsbT, PsbY, PsbZ, Psb30/Ycf12, at least 3 peripheral proteins of the oxygen-evolving complex and a large number of cofactors. It forms dimeric complexes.

The protein resides in the plastid. It is found in the chloroplast thylakoid membrane. Functionally, may control the interaction of photosystem II (PSII) cores with the light-harvesting antenna, regulates electron flow through the 2 photosystem reaction centers. PSII is a light-driven water plastoquinone oxidoreductase, using light energy to abstract electrons from H(2)O, generating a proton gradient subsequently used for ATP formation. The polypeptide is Photosystem II reaction center protein Z (Nephroselmis olivacea (Green alga)).